The chain runs to 332 residues: MPATAGRVRMPANNRVHSSAALQTHGIWQSAIGYDPYAPTSKEEPKTTQQKTEDPENSYASFQGLLALARITGSNNDEARGSCKKCGRVGHLTFQCRNFLSTKEDKEKDPGAIEAAVLSGLEKIRRGVGKGEVEEVSSEEEEESESSDSDVDSEMERIIAERFGKKKGGSSVKKTSSVRKKKKRVSDESDSDSDSGDRKRRRRSMKKRSSHKRRSLSESEDEEEGRSKRRKERRGRKRDEDDSDESEDEDDRRVKRKSRKEKRRRRSRRNHSDDSDSESSEDDRRQKRRNKVAASSDSEANVSGDDVSRVGRGSSKRSEKKSRKRHHRKERE.

Residues 33 to 59 are disordered; that stretch reads GYDPYAPTSKEEPKTTQQKTEDPENSY. Residues 41 to 54 are compositionally biased toward basic and acidic residues; sequence SKEEPKTTQQKTED. A CCHC-type zinc finger spans residues 81–98; that stretch reads GSCKKCGRVGHLTFQCRN. Residues 124–133 are compositionally biased toward basic and acidic residues; that stretch reads IRRGVGKGEV. The interval 124 to 332 is disordered; that stretch reads IRRGVGKGEV…RKRHHRKERE (209 aa). Residues 134–153 show a composition bias toward acidic residues; sequence EEVSSEEEEESESSDSDVDS. The span at 154–163 shows a compositional bias: basic and acidic residues; it reads EMERIIAERF. Composition is skewed to basic residues over residues 198-214 and 227-236; these read RKRR…HKRR and SKRRKERRGR. Positions 241–250 are enriched in acidic residues; that stretch reads DDSDESEDED. Composition is skewed to basic residues over residues 254–269 and 314–332; these read VKRK…RSRR and SSKR…KERE.

Interacts with CAX1. As to expression, expressed in leaves, stems and roots, and at lower levels in flowers.

Its subcellular location is the nucleus. May regulate CAX1 cation transporter. This Arabidopsis thaliana (Mouse-ear cress) protein is CAX-interacting protein 4 (CXIP4).